Reading from the N-terminus, the 103-residue chain is 6-pyruvoyl tetrahydrobiopterin synthase (103 aa).

Ala1 is modified (N-acetylalanine). Position 27 (His27) interacts with Zn(2+). Active-site charge relay system residues include His53 and Glu92.

It belongs to the PTPS family. In terms of assembly, homohexamer formed of two homotrimers in a head to head fashion. Requires Zn(2+) as cofactor.

The catalysed reaction is 7,8-dihydroneopterin 3'-triphosphate = 6-pyruvoyl-5,6,7,8-tetrahydropterin + triphosphate + H(+). Its pathway is cofactor biosynthesis; tetrahydrobiopterin biosynthesis; tetrahydrobiopterin from 7,8-dihydroneopterin triphosphate: step 1/3. Its function is as follows. Involved in the biosynthesis of tetrahydrobiopterin, an essential cofactor of aromatic amino acid hydroxylases. Catalyzes the transformation of 7,8-dihydroneopterin triphosphate into 6-pyruvoyl tetrahydropterin. This chain is 6-pyruvoyl tetrahydrobiopterin synthase (pts), found in Salmo salar (Atlantic salmon).